The sequence spans 409 residues: MTQKHRQPEVNIGLVGHVDHGKTTLVESLSGEWTDQHSEEMKRGISIRLGYADATFRECPELDEPDRYTVEETCPDGSESEHLRTVSFVDAPGHETLMATMLSGAAIMDGAVLVIAANEPVPRAQTEEHLMALDIIGIDNIVIAQNKIDLVDREQALDNYEAIEEFVDGTVAEDAPVVPISAQQDVNMDLLMQTIESEIPTPDRDPDADARLQVARSFDINRPGTTWEDLTGGVLGGSLTQGQLEADDDIEIKPGREIEEGGQSEYQPVETTVRSLQAGGEFVDTVTPGGLLGVGTGLDPSLTKGDALAGQVAGPPGSLPPTRESFTMDVELLDRVVGEDAEEIEPISTGEPLMLTVGTATTVGSVTSARDDECEVQLKRPVCAPDGSKIAINRRVGARWRLIGVGTLR.

The tr-type G domain maps to 7-203 (QPEVNIGLVG…TIESEIPTPD (197 aa)). The interval 16-23 (GHVDHGKT) is G1. Asp-19, Thr-23, Gly-44, and Ser-46 together coordinate Mg(2+). 19–24 (DHGKTT) contributes to the GTP binding site. The segment at 44–48 (GISIR) is G2. Residues 90-93 (DAPG) are G3. Residues 146 to 149 (NKID) and 181 to 183 (SAQ) each bind GTP. Positions 146-149 (NKID) are G4. The segment at 181 to 183 (SAQ) is G5.

It belongs to the TRAFAC class translation factor GTPase superfamily. Classic translation factor GTPase family. EIF2G subfamily. As to quaternary structure, heterotrimer composed of an alpha, a beta and a gamma chain. Mg(2+) is required as a cofactor.

The enzyme catalyses GTP + H2O = GDP + phosphate + H(+). Functionally, eIF-2 functions in the early steps of protein synthesis by forming a ternary complex with GTP and initiator tRNA. The polypeptide is Translation initiation factor 2 subunit gamma (Natronomonas pharaonis (strain ATCC 35678 / DSM 2160 / CIP 103997 / JCM 8858 / NBRC 14720 / NCIMB 2260 / Gabara) (Halobacterium pharaonis)).